A 312-amino-acid polypeptide reads, in one-letter code: MSKIRVLSVDDSALMRQIMTEIINSHSDMEMVATAPDPLVARDLIKKFNPDVLTLDVEMPRMDGLDFLEKLMRLRPMPVVMVSSLTGKGSEVTLRALELGAIDFVTKPQLGIREGMLAYSEMIAEKVRTAAKASLAAHKPLSAPTTLKAGPLLSSEKLIAIGASTGGTEAIRHVLQPLPLSSPALLITQHMPPGFTRSFADRLNKLCQIGVKEAEDGERVLPGHAYIAPGDRHMELARSGANYQIKIHDGPVGMLAMRQAGAWTLAQNEASCVVFGMPREAINMGGVCEVVDLSQVSQQMLAKISAGQAIRI.

The Response regulatory domain occupies 5–122; that stretch reads RVLSVDDSAL…REGMLAYSEM (118 aa). Position 56 is a 4-aspartylphosphate (aspartate 56). Residues 152 to 307 enclose the CheB-type methylesterase domain; the sequence is LLSSEKLIAI…QQMLAKISAG (156 aa). Active-site residues include serine 164, histidine 190, and aspartate 249.

Belongs to the CheB family. Phosphorylated by CheA. Phosphorylation of the N-terminal regulatory domain activates the methylesterase activity.

Its subcellular location is the cytoplasm. It catalyses the reaction [protein]-L-glutamate 5-O-methyl ester + H2O = L-glutamyl-[protein] + methanol + H(+). The catalysed reaction is L-glutaminyl-[protein] + H2O = L-glutamyl-[protein] + NH4(+). Functionally, involved in chemotaxis. Part of a chemotaxis signal transduction system that modulates chemotaxis in response to various stimuli. Catalyzes the demethylation of specific methylglutamate residues introduced into the chemoreceptors (methyl-accepting chemotaxis proteins or MCP) by CheR. Also mediates the irreversible deamidation of specific glutamine residues to glutamic acid. This Shigella boydii serotype 4 (strain Sb227) protein is Protein-glutamate methylesterase/protein-glutamine glutaminase.